The chain runs to 662 residues: Calcium-dependent protease (662 aa).

The Peptidase S8 domain occupies 196–529 (QWHLKETTIG…YGRINALKAV (334 aa)). Residues Asp233, His270, and Ser466 each act as charge relay system in the active site. The region spanning 535–662 (AQPEPVSIFT…IRSLTIELGF (128 aa)) is the P/Homo B domain.

It belongs to the peptidase S8 family.

The protein localises to the cytoplasm. Its function is as follows. Degrades phycobiliproteins in vitro. Has a substrate specificity similar to that of trypsin. This Nostoc sp. (strain PCC 7120 / SAG 25.82 / UTEX 2576) protein is Calcium-dependent protease (prcA).